The following is a 207-amino-acid chain: dTTP/UTP pyrophosphatase (207 aa).

The active-site Proton acceptor is the aspartate 79.

It belongs to the Maf family. YhdE subfamily. Requires a divalent metal cation as cofactor.

It is found in the cytoplasm. The catalysed reaction is dTTP + H2O = dTMP + diphosphate + H(+). It carries out the reaction UTP + H2O = UMP + diphosphate + H(+). In terms of biological role, nucleoside triphosphate pyrophosphatase that hydrolyzes dTTP and UTP. May have a dual role in cell division arrest and in preventing the incorporation of modified nucleotides into cellular nucleic acids. This Rhodopseudomonas palustris (strain HaA2) protein is dTTP/UTP pyrophosphatase.